The chain runs to 617 residues: mRNA-decapping enzyme 1B (617 aa).

Alanine 2 carries the N-acetylalanine modification. Serine 147 is modified (phosphoserine). Tyrosine 191 bears the Phosphotyrosine mark. 2 disordered regions span residues 195–222 (NLIK…LDPE) and 243–266 (TVEP…KLPI). The span at 205–219 (SENQQQRIPQPNQTL) shows a compositional bias: polar residues. Low complexity predominate over residues 252–261 (QQQQQQQQQQ). 2 positions are modified to phosphoserine: serine 275 and serine 336. The tract at residues 362-426 (TPGAANKCDP…VGHQAHGREQ (65 aa)) is disordered. A compositionally biased stretch (low complexity) spans 371 to 381 (PSTPAPASSAA). Threonine 392 carries the phosphothreonine modification. Phosphoserine is present on residues serine 448 and serine 511.

It belongs to the DCP1 family. Interacts with DCP1A. As to quaternary structure, (Microbial infection) Interacts with rotavirus A non-structural protein 2; this interaction probably plays a role in the sequestration of DCP1B in viral factories. Interacts with rotavirus A non-structural protein 5; this interaction probably plays a role in its sequestration in viral factories.

The protein localises to the cytoplasm. The protein resides in the nucleus. The catalysed reaction is a 5'-end (N(7)-methyl 5'-triphosphoguanosine)-ribonucleoside in mRNA + H2O = N(7)-methyl-GDP + a 5'-end phospho-ribonucleoside in mRNA + 2 H(+). Functionally, may play a role in the degradation of mRNAs, both in normal mRNA turnover and in nonsense-mediated mRNA decay. May remove the 7-methyl guanine cap structure from mRNA molecules, yielding a 5'-phosphorylated mRNA fragment and 7m-GDP. This Homo sapiens (Human) protein is mRNA-decapping enzyme 1B (DCP1B).